The primary structure comprises 172 residues: Ribosome maturation factor RimM (172 aa).

Positions 96-168 constitute a PRC barrel domain; sequence DGEFYYHEII…RIEVELMEGL (73 aa).

Belongs to the RimM family. Binds ribosomal protein uS19.

The protein resides in the cytoplasm. Functionally, an accessory protein needed during the final step in the assembly of 30S ribosomal subunit, possibly for assembly of the head region. Essential for efficient processing of 16S rRNA. May be needed both before and after RbfA during the maturation of 16S rRNA. It has affinity for free ribosomal 30S subunits but not for 70S ribosomes. In Streptococcus thermophilus (strain ATCC BAA-491 / LMD-9), this protein is Ribosome maturation factor RimM.